The following is a 4060-amino-acid chain: Replicase polyprotein 1a (4060 aa).

The CoV Nsp1 globular domain occupies 2–109 (FYNQVTLAVA…DFDVVFGHGA (108 aa)). Residues 112 to 358 (VVFVDKYMCG…NTLLSNQLRL (247 aa)) enclose the CoV Nsp2 N-terminal domain. Positions 245, 247, 264, and 265 each coordinate Zn(2+). A C4 region spans residues 245 to 265 (CNCGSESWSVGAWDGYLSSCC). Residues 388-778 (YDDILTNNKP…LDVYNGFLET (391 aa)) form the CoV Nsp2 middle domain. The 123-residue stretch at 776–898 (LETVCSVAYT…LPVAFTKLAG (123 aa)) folds into the CoV Nsp2 C-terminal domain. One can recognise a Ubiquitin-like 1 domain in the interval 899 to 994 (GKISFSDDVI…VMISQWPISN (96 aa)). The Peptidase C16 1 domain occupies 1021-1262 (EVDIIEQPFE…EAGEVKPFAV (242 aa)). Residue Cys-1062 is the For PL1-PRO activity of the active site. Cys-1134, Cys-1136, Cys-1163, and Cys-1165 together coordinate Zn(2+). The segment at 1134–1165 (CDCGKKFDDQVGCLFWIMPYTKLFQKGECCIC) adopts a C4-type 1 zinc-finger fold. Active-site for PL1-PRO activity residues include His-1212 and Asp-1225. The Macro domain occupies 1263–1421 (YKNVKFYLGD…AVLKFLDGLD (159 aa)). Residues 1579–1633 (NDNVVLKITEDGINVKDVVVESSKSLGKQLGVVSDGVDSFEGVLPINTDTVLSVA) form the Ubiquitin-like 2 domain. The Peptidase C16 2 domain maps to 1640–1886 (AFYGFEKAAL…VPTIVSEKIS (247 aa)). The active-site For PL2-PRO activity is the Cys-1678. Residues Cys-1757, Cys-1760, Cys-1786, and His-1788 each contribute to the Zn(2+) site. The segment at 1757-1788 (CDICKSTVVEVKSAIVCASVLKDGCDVGFCPH) adopts a C4-type 2; atypical zinc-finger fold. Residues His-1836 and Asp-1841 each act as for PL2-PRO activity in the active site. 2 helical membrane-spanning segments follow: residues 1903–1923 (DFVM…FSLL) and 1968–1988 (IVTL…VFMI). An HD1 region spans residues 1903 to 2131 (DFVMNNIVLF…LFVRHIIVGC (229 aa)). One can recognise a 3Ecto domain in the interval 1983 to 2048 (ALVFMIVQFS…TSLVWKHIRD (66 aa)). Disulfide bonds link Cys-1999–Cys-2026 and Cys-2017–Cys-2023. 3 consecutive transmembrane segments (helical) span residues 2050-2070 (ILIS…GNMY), 2073-2093 (FGLL…LGFH), and 2111-2131 (FLAT…IVGC). A Y1 region spans residues 2122–2212 (LFVRHIIVGC…VVKTAVQPTA (91 aa)). Positions 2122 to 2461 (LFVRHIIVGC…PATSIVAKQG (340 aa)) constitute a CoV Nsp3 Y domain. Residues His-2126, Cys-2131, Cys-2136, Cys-2139, Cys-2172, His-2175, Cys-2179, and Cys-2182 each contribute to the Zn(2+) site. The ZF1 stretch occupies residues 2126-2139 (HIIVGCNNADCVAC). Positions 2172 to 2182 (CNKHNFFCVNC) are ZF2. Residues 2213–2302 (PAYVIIDKVD…LVNSELLSTL (90 aa)) are Y2. The tract at residues 2213–2461 (PAYVIIDKVD…PATSIVAKQG (249 aa)) is coV-Y. The Y3 stretch occupies residues 2303–2359 (SVDFNGVLHKAYVDVLCNSFFKELTANMSMAECKATLGLTVSDDDFVSAVANAHRYD). The tract at residues 2360–2461 (VLLSDLSFNN…PATSIVAKQG (102 aa)) is Y4. 5 consecutive transmembrane segments (helical) span residues 2468-2488 (YNFL…VSFI), 2727-2747 (GHML…FLVT), 2752-2769 (VFGD…ATLI), 2772-2792 (ISYV…LYFV), and 2800-2820 (AWIW…WWLL). Residues 2468–2820 (YNFLWYVCLF…YFLLIPWWLL (353 aa)) form an HD2 region. One can recognise a Nsp4C domain in the interval 2844-2939 (LFEGDKFIGT…PTISYNSTLQ (96 aa)). Residues 2940–3242 (SGLKKMAQPS…VKQMYGVNLQ (303 aa)) form the Peptidase C30 domain. Active-site for 3CL-PRO activity residues include His-2980 and Cys-3083. 7 consecutive transmembrane segments (helical) span residues 3254–3274 (FLFS…TNTI), 3279–3299 (VILT…TMFL), 3303–3323 (FLFL…YNCV), 3342–3362 (VLQM…VVFL), 3376–3396 (FTYV…GDFL), 3397–3417 (SLLV…AIVF), and 3442–3462 (LVVY…LYWF). Residues 3254–3462 (FLFSVFFTMF…CTYWGILYWF (209 aa)) are HD3. The RdRp Nsp7 cofactor domain occupies 3522-3604 (SKLTDLKCTN…SYFDNSSTLQ (83 aa)). The region spanning 3605 to 3799 (SVASSFVSMP…LNCERVVKLQ (195 aa)) is the RdRp Nsp8 cofactor domain. The region spanning 3800 to 3908 (NNEIMPGKLK…GFIGATIRLQ (109 aa)) is the Nsp9 ssRNA-binding domain. The 139-residue stretch at 3909-4047 (AGKQTELAVN…DRTTIQSVDI (139 aa)) folds into the ExoN/MTase coactivator domain. The Zn(2+) site is built by Cys-3982, Cys-3985, His-3991, Cys-3998, Cys-4024, Cys-4027, Cys-4035, and Cys-4037. Zinc fingers lie at residues 3982–3998 (CLYC…DGYC) and 4024–4037 (CNVC…GCAC).

It belongs to the coronaviruses polyprotein 1ab family. In terms of assembly, 3CL-PRO exists as monomer and homodimer. Eight copies of nsp7 and eight copies of nsp8 assemble to form a heterohexadecamer. Nsp9 is a dimer. Nsp10 forms a dodecamer. Specific enzymatic cleavages in vivo by its own proteases yield mature proteins. 3CL-PRO and PL-PRO proteinases are autocatalytically processed.

The protein localises to the host membrane. It is found in the host cytoplasm. The protein resides in the host perinuclear region. It carries out the reaction Thiol-dependent hydrolysis of ester, thioester, amide, peptide and isopeptide bonds formed by the C-terminal Gly of ubiquitin (a 76-residue protein attached to proteins as an intracellular targeting signal).. Functionally, the papain-like proteinase 1 (PLP1) and papain-like proteinase 2 (PLP2) are responsible for the cleavages located at the N-terminus of the replicase polyprotein. In addition, PLP2 possesses a deubiquitinating/deISGylating activity and processes both 'Lys-48'- and 'Lys-63'-linked polyubiquitin chains from cellular substrates. PLP2 also antagonizes innate immune induction of type I interferon by blocking the nuclear translocation of host IRF-3. Responsible for the majority of cleavages as it cleaves the C-terminus of replicase polyprotein at 11 sites. Recognizes substrates containing the core sequence [ILMVF]-Q-|-[SGACN]. Inhibited by the substrate-analog Cbz-Val-Asn-Ser-Thr-Leu-Gln-CMK. Also contains an ADP-ribose-1''-phosphate (ADRP)-binding function. Its function is as follows. Nsp7-nsp8 hexadecamer may possibly confer processivity to the polymerase, maybe by binding to dsRNA or by producing primers utilized by the latter. In terms of biological role, nsp9 is a ssRNA-binding protein. In Homo sapiens (Human), this protein is Replicase polyprotein 1a.